Here is a 225-residue protein sequence, read N- to C-terminus: Myelin-associated neurite-outgrowth inhibitor (225 aa).

Residues 1-58 are Cytoplasmic-facing; the sequence is MNPVYSPGSSGVPYANAKGIGYPAGFPMGYAAAAPAYSPNMYAGPNPAFQQELEHPAH. The helical transmembrane segment at 59–75 threads the bilayer; it reads VSSGVQMFMFGHAFSVA. Residues 76–173 are Extracellular-facing; sequence RNGAIPSGYT…PAPIQSPRGN (98 aa). The helical transmembrane segment at 174-193 threads the bilayer; that stretch reads GVAMGMVAGTTMAMSAGTLL. The Cytoplasmic segment spans residues 194–225; the sequence is TSHYPSPVAPQVTMPTYRPPGTPTYSYVPPQW.

This sequence belongs to the FAM168 family.

The protein resides in the cytoplasm. It is found in the perinuclear region. The protein localises to the cell membrane. Its subcellular location is the cell projection. It localises to the axon. In terms of biological role, inhibitor of neuronal axonal outgrowth. The chain is Myelin-associated neurite-outgrowth inhibitor (fam168b) from Xenopus laevis (African clawed frog).